We begin with the raw amino-acid sequence, 485 residues long: Probable carboxypeptidase S-like 1 (485 aa).

The signal sequence occupies residues 1–21 (MIFKFFFIFFLIILVIKISES). Histidine 111 is a Zn(2+) binding site. Aspartate 113 is an active-site residue. Aspartate 142 serves as a coordination point for Zn(2+). Glutamate 177 (proton acceptor) is an active-site residue. Residues glutamate 178, aspartate 204, and histidine 431 each contribute to the Zn(2+) site.

This sequence belongs to the peptidase M20A family. Requires Zn(2+) as cofactor.

The protein localises to the secreted. This chain is Probable carboxypeptidase S-like 1, found in Dictyostelium discoideum (Social amoeba).